We begin with the raw amino-acid sequence, 392 residues long: MEPVQYSYEDFARLPTTVFWIMGYDMLGVPKTRSRRILYWIYRFLCLASHGVCVGVMVFRMVEAKTIDNVSLIMRYATLVTYIINSDTKFATVLQRSAIQSLNSKLAELYPKTTLDRIYHRVNDHYWTKSFVYLVIIYIGSSIMVVIGPIITSIIAYFTHNVFTYMHCYPYFLYDPEKDPVWIYISIYALEWLHSTQMVISNIGADIWLLYFQVQINLHFRGIIRSLADHKPSVKHDQEDRKFIAKIVDKQVHLVSLQNDLNGIFGKSLLLSLLTTAAVICTVAVYTLIQGPTLEGFTYVIFIGTSVMQVYLVCYYGQQVLDLSGEVAHAVYNHDFHDASIAYKRYLLIIIIRAQQPVELNAMGYLSISLDTFKQLMSVSYRVITMLMQMIQ.

The Cytoplasmic segment spans residues 1–36; sequence MEPVQYSYEDFARLPTTVFWIMGYDMLGVPKTRSRR. The helical transmembrane segment at 37-57 threads the bilayer; it reads ILYWIYRFLCLASHGVCVGVM. Topologically, residues 58-69 are extracellular; sequence VFRMVEAKTIDN. Residue Asn-69 is glycosylated (N-linked (GlcNAc...) asparagine). A helical transmembrane segment spans residues 70-90; it reads VSLIMRYATLVTYIINSDTKF. Residues 91–130 are Cytoplasmic-facing; it reads ATVLQRSAIQSLNSKLAELYPKTTLDRIYHRVNDHYWTKS. The chain crosses the membrane as a helical span at residues 131-151; the sequence is FVYLVIIYIGSSIMVVIGPII. Over 152–179 the chain is Extracellular; it reads TSIIAYFTHNVFTYMHCYPYFLYDPEKD. Residues 180–200 form a helical membrane-spanning segment; sequence PVWIYISIYALEWLHSTQMVI. The Cytoplasmic portion of the chain corresponds to 201–268; that stretch reads SNIGADIWLL…NDLNGIFGKS (68 aa). A helical membrane pass occupies residues 269 to 289; the sequence is LLLSLLTTAAVICTVAVYTLI. Over 290 to 295 the chain is Extracellular; the sequence is QGPTLE. A helical membrane pass occupies residues 296–316; that stretch reads GFTYVIFIGTSVMQVYLVCYY. Residues 317-363 are Cytoplasmic-facing; it reads GQQVLDLSGEVAHAVYNHDFHDASIAYKRYLLIIIIRAQQPVELNAM. Residues 364-384 form a helical membrane-spanning segment; that stretch reads GYLSISLDTFKQLMSVSYRVI. At 385 to 392 the chain is on the extracellular side; sequence TMLMQMIQ.

It belongs to the insect chemoreceptor superfamily. Heteromeric odorant receptor channel (TC 1.A.69) family. Or49a subfamily. Interacts with Orco. Complexes exist early in the endomembrane system in olfactory sensory neurons (OSNs), coupling these complexes to the conserved ciliary trafficking pathway. As to expression, expressed in olfactory sensory neurons in the antenna.

The protein resides in the cell membrane. Functionally, odorant receptor which mediates acceptance or avoidance behavior, depending on its substrates. The odorant receptor repertoire encodes a large collection of odor stimuli that vary widely in identity, intensity, and duration. May form a complex with Orco to form odorant-sensing units, providing sensitive and prolonged odorant signaling and calcium permeability. This Drosophila melanogaster (Fruit fly) protein is Odorant receptor 85f (Or85f).